Here is a 364-residue protein sequence, read N- to C-terminus: Phosphoserine aminotransferase (364 aa).

Arginine 41 serves as a coordination point for L-glutamate. Residues 75–76 (AS), tryptophan 100, threonine 155, aspartate 175, and glutamine 198 each bind pyridoxal 5'-phosphate. At lysine 199 the chain carries N6-(pyridoxal phosphate)lysine. 239–240 (NT) is a pyridoxal 5'-phosphate binding site.

The protein belongs to the class-V pyridoxal-phosphate-dependent aminotransferase family. SerC subfamily. As to quaternary structure, homodimer. The cofactor is pyridoxal 5'-phosphate.

It localises to the cytoplasm. It carries out the reaction O-phospho-L-serine + 2-oxoglutarate = 3-phosphooxypyruvate + L-glutamate. The catalysed reaction is 4-(phosphooxy)-L-threonine + 2-oxoglutarate = (R)-3-hydroxy-2-oxo-4-phosphooxybutanoate + L-glutamate. The protein operates within amino-acid biosynthesis; L-serine biosynthesis; L-serine from 3-phospho-D-glycerate: step 2/3. Its function is as follows. Catalyzes the reversible conversion of 3-phosphohydroxypyruvate to phosphoserine and of 3-hydroxy-2-oxo-4-phosphonooxybutanoate to phosphohydroxythreonine. The polypeptide is Phosphoserine aminotransferase (Streptococcus uberis (strain ATCC BAA-854 / 0140J)).